The sequence spans 240 residues: Adenylate dimethylallyltransferase (240 aa).

Belongs to the isopentenyl transferase family.

The catalysed reaction is dimethylallyl diphosphate + AMP = N(6)-(dimethylallyl)adenosine 5'-phosphate + diphosphate. Transfers dimethylallyl groups to AMP as part of the biosynthesis of cytokinin phytohormones. The chain is Adenylate dimethylallyltransferase (ipt) from Agrobacterium vitis (Rhizobium vitis).